A 340-amino-acid polypeptide reads, in one-letter code: MLSMQASFFFPTGPFILFVFTASTIFHLQQRMVKIQPTWELQMVTQVTTESPSSPQLKGMWTINAIGRLGNQMGEYATLYALARMNGRPAFIPPEMHSTLAPIFRITLPVLHASTARRIPWQNYHLNDWMEERYRHIPGEYVRLTGYPCSWTFYHHLRTEILREFTLHNHVREEAQDFLRGLRVNGSRPSTYVGVHVRRGDYVHVMPNVWKGVVADRRYLEQALDWFRARYRSPVFVVSSNGMAWCRENINASRGDVVFAGNGIEGSPAKDFALLTQCNHTVMTIGTFGIWAAYLAGGETIYLANYTLPDSPFLKLFKPEAAFLPEWIGIEADLSPLLKH.

The Cytoplasmic segment spans residues 1-7 (MLSMQAS). Residues 8-28 (FFFPTGPFILFVFTASTIFHL) form a helical; Signal-anchor for type II membrane protein membrane-spanning segment. Over 29–340 (QQRMVKIQPT…EADLSPLLKH (312 aa)) the chain is Lumenal. 4 N-linked (GlcNAc...) asparagine glycosylation sites follow: asparagine 185, asparagine 251, asparagine 279, and asparagine 305.

Its subcellular location is the golgi apparatus. It is found in the golgi stack membrane. It carries out the reaction a beta-D-galactosyl-(1-&gt;3)-N-acetyl-beta-D-glucosaminyl derivative + GDP-beta-L-fucose = an alpha-L-Fuc-(1-&gt;2)-beta-D-Gal-(1-&gt;3)-beta-D-GlcNAc derivative + GDP + H(+). It catalyses the reaction a beta-D-galactosyl-(1-&gt;4)-N-acetyl-beta-D-glucosaminyl derivative + GDP-beta-L-fucose = an alpha-L-Fuc-(1-&gt;2)-beta-D-Gal-(1-&gt;4)-beta-D-GlcNAc derivative + GDP + H(+). The catalysed reaction is a neolactoside nLc4Cer + GDP-beta-L-fucose = a neolactoside IV(2)-alpha-Fuc-nLc4Cer + GDP + H(+). The enzyme catalyses a neolactoside nLc4Cer(d18:1(4E)) + GDP-beta-L-fucose = a neolactoside IV(2)-alpha-Fuc-nLc4Cer(d18:1(4E)) + GDP + H(+). It carries out the reaction a ganglioside GM1 + GDP-beta-L-fucose = a ganglioside Fuc-GM1 + GDP + H(+). It catalyses the reaction a ganglioside GA1 + GDP-beta-L-fucose = a ganglioside Fuc-GA1 + GDP + H(+). The catalysed reaction is Lc4Cer + GDP-beta-L-fucose = alpha-L-fucosyl-(1-&gt;2)-beta-D-galactosyl-(1-&gt;3)-N-acetyl-beta-D-glucosaminyl-(1-&gt;3)-beta-D-galactosyl-(1-&gt;4)-beta-D-glucosyl-(1&lt;-&gt;1')-ceramide + GDP + H(+). The enzyme catalyses a beta-D-Gal-(1-&gt;3)-beta-D-GlcNAc-(1-&gt;3)-beta-D-Gal-(1-&gt;4)-beta-D-Glc-(1&lt;-&gt;1')-Cer(d18:1(4E)) + GDP-beta-L-fucose = alpha-L-fucosyl-(1-&gt;2)- beta-D-galactosyl-(1-&gt;3)-N-acetyl-beta-D-glucosaminyl-(1-&gt;3)-beta-D-galactosyl-(1-&gt;4)-beta-D-glucosyl-(1&lt;-&gt;1')-N-acylsphing-4-enine + GDP + H(+). It carries out the reaction a ganglioside GD1b + GDP-beta-L-fucose = a ganglioside Fuc-GD1b + GDP + H(+). It catalyses the reaction a ganglioside GM1 (d18:1(4E)) + GDP-beta-L-fucose = a ganglioside Fuc-GM1 (d18:1(4E)) + GDP + H(+). The catalysed reaction is a globoside GalGb4Cer (d18:1(4E)) + GDP-beta-L-fucose = a globoside Globo-H (d18:1(4E)) + GDP + H(+). The enzyme catalyses a lactoside III(4)-a-Fuc-Lc4Cer + GDP-beta-L-fucose = a lactoside IV(2),III(4)-a-[Fuc]2-Lc4Cer + GDP + H(+). It carries out the reaction beta-D-galactosyl-(1-&gt;3)-N-acetyl-D-galactosamine + GDP-beta-L-fucose = alpha-L-fucosyl-(1-&gt;2)-beta-D-galactosyl-(1-&gt;3)-N-acetyl-D-galactosamine + GDP + H(+). Its pathway is protein modification; protein glycosylation. Catalyzes the transfer of L-fucose, from a guanosine diphosphate-beta-L-fucose, to the terminal galactose on both O- and N-linked glycans chains of cell surface glycoproteins and glycolipids and the resulting epitope regulates several processes such as cell-cell interaction including host-microbe interaction, cell surface expression and cell proliferation. Preferentially fucosylates gangliosides GA1 and GM1 in the antrum, cecum and colon and in the female reproductive organs. Fucosylated host glycoproteins or glycolipids mediate interaction with intestinal microbiota influencing its composition. Creates a soluble precursor oligosaccharide FuC-alpha ((1,2)Galbeta-) called the H antigen which is an essential substrate for the final step in the soluble ABO blood group antigen synthesis pathway. The chain is Galactoside alpha-(1,2)-fucosyltransferase 2 from Sus scrofa (Pig).